A 458-amino-acid polypeptide reads, in one-letter code: 5'-adenylylsulfate reductase 3, chloroplastic (458 aa).

The segment at 1–24 (MALAINVSSSSSSAISSSSFPSSD) is disordered. Residues 1–69 (MALAINVSSS…VQSITKESIV (69 aa)) constitute a chloroplast transit peptide. Positions 8–23 (SSSSSSAISSSSFPSS) are enriched in low complexity. Positions 70-319 (ASEVTEKLDV…KAKECGLHKG (250 aa)) are reductase domain. One can recognise a Thioredoxin domain in the interval 337–458 (ASVADIFNSE…SLTSFLNLVR (122 aa)). Active-site nucleophile residues include Cys-378 and Cys-381. Cys-378 and Cys-381 are disulfide-bonded.

It belongs to the APS reductase family. [4Fe-4S] cluster serves as cofactor. Leaves, roots and stem.

The protein resides in the plastid. Its subcellular location is the chloroplast. It catalyses the reaction glutathione disulfide + sulfite + AMP + 2 H(+) = adenosine 5'-phosphosulfate + 2 glutathione. With respect to regulation, stimulated by sodium sulfate &gt; ammonium sulfate. In terms of biological role, reduces sulfate for Cys biosynthesis. Substrate preference is adenosine-5'-phosphosulfate (APS) &gt;&gt; 3'-phosphoadenosine-5'-phosphosulfate (PAPS). Uses glutathione or DTT as source of protons. In Arabidopsis thaliana (Mouse-ear cress), this protein is 5'-adenylylsulfate reductase 3, chloroplastic (APR3).